An 87-amino-acid chain; its full sequence is Protein anon-73B1 (87 aa).

Residues Leu25–Leu47 form a helical membrane-spanning segment. The tract at residues Pro52 to Arg87 is disordered. Over residues Val63 to Arg72 the composition is skewed to basic and acidic residues. Residues Thr73–Arg87 are compositionally biased toward basic residues.

This sequence belongs to the UPF0239 family.

It is found in the membrane. The polypeptide is Protein anon-73B1 (Drosophila erecta (Fruit fly)).